The following is a 358-amino-acid chain: UDP-N-acetylglucosamine--N-acetylmuramyl-(pentapeptide) pyrophosphoryl-undecaprenol N-acetylglucosamine transferase (358 aa).

The UDP-N-acetyl-alpha-D-glucosamine site is built by S197 and Q288.

It belongs to the glycosyltransferase 28 family. MurG subfamily.

Its subcellular location is the cell membrane. It catalyses the reaction Mur2Ac(oyl-L-Ala-gamma-D-Glu-L-Lys-D-Ala-D-Ala)-di-trans,octa-cis-undecaprenyl diphosphate + UDP-N-acetyl-alpha-D-glucosamine = beta-D-GlcNAc-(1-&gt;4)-Mur2Ac(oyl-L-Ala-gamma-D-Glu-L-Lys-D-Ala-D-Ala)-di-trans,octa-cis-undecaprenyl diphosphate + UDP + H(+). The protein operates within cell wall biogenesis; peptidoglycan biosynthesis. Functionally, cell wall formation. Catalyzes the transfer of a GlcNAc subunit on undecaprenyl-pyrophosphoryl-MurNAc-pentapeptide (lipid intermediate I) to form undecaprenyl-pyrophosphoryl-MurNAc-(pentapeptide)GlcNAc (lipid intermediate II). The protein is UDP-N-acetylglucosamine--N-acetylmuramyl-(pentapeptide) pyrophosphoryl-undecaprenol N-acetylglucosamine transferase of Streptococcus agalactiae serotype Ia (strain ATCC 27591 / A909 / CDC SS700).